The primary structure comprises 544 residues: Sphingosine-1-phosphate lyase (544 aa).

The Lumenal portion of the chain corresponds to 1 to 29 (MDSFSYSSMKSMLIQARGSLNSRLSEFEP). A helical; Signal-anchor for type III membrane protein membrane pass occupies residues 30 to 50 (LVLLLVPLVSLFLAQIIGSVF). Residues 51-544 (GVVHEKGLKA…LLVSFMDSQY (494 aa)) are Cytoplasmic-facing. N6-(pyridoxal phosphate)lysine is present on Lys349.

Belongs to the group II decarboxylase family. Sphingosine-1-phosphate lyase subfamily. Pyridoxal 5'-phosphate serves as cofactor. As to expression, expressed in the peripheral parts of leaves and the bases of trichomes.

It localises to the endoplasmic reticulum membrane. The enzyme catalyses sphinganine 1-phosphate = hexadecanal + phosphoethanolamine. It participates in lipid metabolism; sphingolipid metabolism. Its function is as follows. Cleaves phosphorylated sphingoid bases (PSBs), such as sphingosine-1-phosphate, into fatty aldehydes and phosphoethanolamine. May play a minor role in maintenance of sphingolipid metabolism during normal plant development and growth, but be required for maintaining sphingoid long chain bases (LCB) and their phosphorylated derivatives (LCB-P) levels when sphingolipid metabolism is perturbed. May play a role in dehydration stress. The polypeptide is Sphingosine-1-phosphate lyase (DPL1) (Arabidopsis thaliana (Mouse-ear cress)).